The sequence spans 109 residues: Large ribosomal subunit protein uL22 (109 aa).

It belongs to the universal ribosomal protein uL22 family. As to quaternary structure, part of the 50S ribosomal subunit.

In terms of biological role, this protein binds specifically to 23S rRNA; its binding is stimulated by other ribosomal proteins, e.g. L4, L17, and L20. It is important during the early stages of 50S assembly. It makes multiple contacts with different domains of the 23S rRNA in the assembled 50S subunit and ribosome. The globular domain of the protein is located near the polypeptide exit tunnel on the outside of the subunit, while an extended beta-hairpin is found that lines the wall of the exit tunnel in the center of the 70S ribosome. The sequence is that of Large ribosomal subunit protein uL22 from Chromobacterium violaceum (strain ATCC 12472 / DSM 30191 / JCM 1249 / CCUG 213 / NBRC 12614 / NCIMB 9131 / NCTC 9757 / MK).